A 331-amino-acid chain; its full sequence is Large ribosomal subunit protein uL3 (331 aa).

Belongs to the universal ribosomal protein uL3 family. In terms of assembly, part of the 50S ribosomal subunit. Forms a cluster with proteins L14 and L24e.

Its function is as follows. One of the primary rRNA binding proteins, it binds directly near the 3'-end of the 23S rRNA, where it nucleates assembly of the 50S subunit. This is Large ribosomal subunit protein uL3 from Thermoplasma acidophilum (strain ATCC 25905 / DSM 1728 / JCM 9062 / NBRC 15155 / AMRC-C165).